A 482-amino-acid polypeptide reads, in one-letter code: Cobyric acid synthase (482 aa).

In terms of domain architecture, GATase cobBQ-type spans 243–430 (ACKVVVPQLE…LHGLFTSDAF (188 aa)). The active-site Nucleophile is the C325. H422 is an active-site residue.

The protein belongs to the CobB/CobQ family. CobQ subfamily.

Its pathway is cofactor biosynthesis; adenosylcobalamin biosynthesis. Functionally, catalyzes amidations at positions B, D, E, and G on adenosylcobyrinic A,C-diamide. NH(2) groups are provided by glutamine, and one molecule of ATP is hydrogenolyzed for each amidation. The chain is Cobyric acid synthase from Ruegeria sp. (strain TM1040) (Silicibacter sp.).